Reading from the N-terminus, the 957-residue chain is UvrABC system protein A (957 aa).

ATP is bound at residue 33-40; sequence GLSGSGKS. The C4-type zinc finger occupies 252 to 279; the sequence is CPHCGFSIGELEPRLFSFNSPFGACPTC. 2 ABC transporter domains span residues 309-587 and 607-935; these read WTPI…PNSL and PDGR…RYLK. 639–646 is an ATP binding site; it reads GVSGSGKS. Residues 738-764 form a C4-type zinc finger; that stretch reads CEACRGDGIIKIEMHFLPDVYVPCEVC.

This sequence belongs to the ABC transporter superfamily. UvrA family. In terms of assembly, forms a heterotetramer with UvrB during the search for lesions.

The protein localises to the cytoplasm. Its function is as follows. The UvrABC repair system catalyzes the recognition and processing of DNA lesions. UvrA is an ATPase and a DNA-binding protein. A damage recognition complex composed of 2 UvrA and 2 UvrB subunits scans DNA for abnormalities. When the presence of a lesion has been verified by UvrB, the UvrA molecules dissociate. The chain is UvrABC system protein A from Bacillus subtilis (strain 168).